Reading from the N-terminus, the 339-residue chain is DNA-directed RNA polymerase RPB7 homolog (339 aa).

The protein belongs to the Asfivirus DNA-directed RNA polymerase RPB7 homolog family. In terms of assembly, part of the viral DNA-directed RNA polymerase that consists of 8 polII-like subunits (RPB1, RPB2, RPB3, RPB5, RPB6, RPB7, RPB9, RPB10), a capping enzyme and a termination factor.

The protein resides in the host cytoplasm. Its subcellular location is the virion. Its function is as follows. Component of the DNA-directed RNA polymerase (RNAP) that catalyzes the transcription in the cytoplasm of viral DNA into RNA using the four ribonucleoside triphosphates as substrates. This is DNA-directed RNA polymerase RPB7 homolog from African swine fever virus (strain Badajoz 1971 Vero-adapted) (Ba71V).